Reading from the N-terminus, the 309-residue chain is Taste receptor type 2 member 31 (309 aa).

Topologically, residues Met1–Thr2 are extracellular. Residues Thr3–Ala23 form a helical membrane-spanning segment. Residues Asn24–Arg55 are Cytoplasmic-facing. A helical transmembrane segment spans residues Val56 to Tyr76. Topologically, residues Ser77–Thr100 are extracellular. A helical transmembrane segment spans residues Ser101–Leu121. Topologically, residues Lys122–Lys126 are cytoplasmic. Residues Ser127 to Ile147 form a helical membrane-spanning segment. The Extracellular portion of the chain corresponds to Asn148 to Thr181. An N-linked (GlcNAc...) asparagine glycan is attached at Asn161. A helical membrane pass occupies residues Leu182–Leu202. Residues Cys203 to Gln229 are Cytoplasmic-facing. A helical membrane pass occupies residues Thr230–Trp250. Residues Ser251 to Pro259 lie on the Extracellular side of the membrane. The helical transmembrane segment at Val260–Ile280 threads the bilayer. The Cytoplasmic segment spans residues Trp281–Pro309.

This sequence belongs to the G-protein coupled receptor T2R family. As to expression, expressed in subsets of taste receptor cells of the tongue and exclusively in gustducin-positive cells.

It is found in the membrane. Its function is as follows. Receptor that may play a role in the perception of bitterness and is gustducin-linked. May play a role in sensing the chemical composition of the gastrointestinal content. The activity of this receptor may stimulate alpha gustducin, mediate PLC-beta-2 activation and lead to the gating of TRPM5. Activated by the sulfonyl amide sweeteners saccharin and acesulfame K. This Homo sapiens (Human) protein is Taste receptor type 2 member 31 (TAS2R31).